Consider the following 544-residue polypeptide: Methionine--tRNA ligase (544 aa).

Positions 10–20 (PYANGSLHLGH) match the 'HIGH' region motif. The Zn(2+) site is built by Cys-141, Cys-144, Cys-153, and Cys-156. Positions 329–333 (KLSTS) match the 'KMSKS' region motif. Thr-332 is a binding site for ATP.

This sequence belongs to the class-I aminoacyl-tRNA synthetase family. MetG type 1 subfamily. In terms of assembly, monomer. It depends on Zn(2+) as a cofactor.

It is found in the cytoplasm. The catalysed reaction is tRNA(Met) + L-methionine + ATP = L-methionyl-tRNA(Met) + AMP + diphosphate. Is required not only for elongation of protein synthesis but also for the initiation of all mRNA translation through initiator tRNA(fMet) aminoacylation. This Bacillus cereus (strain 03BB102) protein is Methionine--tRNA ligase.